Consider the following 205-residue polypeptide: Urease accessory protein UreE (205 aa).

The segment covering 171–192 (HHGHSHSHDHDHDHDHDHDHQH) has biased composition (basic and acidic residues). The disordered stretch occupies residues 171–205 (HHGHSHSHDHDHDHDHDHDHQHGPCCSHGHHHGHR).

This sequence belongs to the UreE family.

It is found in the cytoplasm. Functionally, involved in urease metallocenter assembly. Binds nickel. Probably functions as a nickel donor during metallocenter assembly. The sequence is that of Urease accessory protein UreE from Burkholderia pseudomallei (strain K96243).